Consider the following 307-residue polypeptide: Acyl transferase (307 aa).

Residues serine 116, aspartate 213, and histidine 243 each act as charge relay system in the active site.

It belongs to the LuxD family.

Its pathway is lipid metabolism; fatty acid reduction for biolumincescence. Its function is as follows. Acyl transferase is part of the fatty acid reductase system required for aldehyde biosynthesis; it produces fatty acids for the luminescent reaction. The polypeptide is Acyl transferase (Photorhabdus luminescens (Xenorhabdus luminescens)).